A 262-amino-acid chain; its full sequence is MLLGVNIDHIAVLRQARMVNDPDLLEAAFIAAKHGDQITLHVREDRRHAQDFDLENIIKFCKSPINLECALNDEILNLALKLKPHRVTLVPEKREELTTEGGLCLNHAKLKQSIEKLQNANIEVSLFINPSLEDIEKSKILKAQFIELHTGHYANLHNALFSNISHTAFALKELGQDKKTLQTQFEKELQNLELCAKKGTELGLKVAAGHGLNYKNVKLIVKIKEICELNIGQSIVARSVFTGLKNAILEMKELIKDEKTSH.

N6 contributes to the 3-amino-2-oxopropyl phosphate binding site. A 1-deoxy-D-xylulose 5-phosphate-binding site is contributed by 8–9; it reads DH. Residue R17 participates in 3-amino-2-oxopropyl phosphate binding. The Proton acceptor role is filled by H41. Residues R43 and H48 each contribute to the 1-deoxy-D-xylulose 5-phosphate site. E68 serves as the catalytic Proton acceptor. Residue T98 participates in 1-deoxy-D-xylulose 5-phosphate binding. The active-site Proton donor is H210. 3-amino-2-oxopropyl phosphate is bound by residues G211 and 232-233; that span reads GQ.

The protein belongs to the PNP synthase family. Homooctamer; tetramer of dimers.

The protein localises to the cytoplasm. The catalysed reaction is 3-amino-2-oxopropyl phosphate + 1-deoxy-D-xylulose 5-phosphate = pyridoxine 5'-phosphate + phosphate + 2 H2O + H(+). It participates in cofactor biosynthesis; pyridoxine 5'-phosphate biosynthesis; pyridoxine 5'-phosphate from D-erythrose 4-phosphate: step 5/5. In terms of biological role, catalyzes the complicated ring closure reaction between the two acyclic compounds 1-deoxy-D-xylulose-5-phosphate (DXP) and 3-amino-2-oxopropyl phosphate (1-amino-acetone-3-phosphate or AAP) to form pyridoxine 5'-phosphate (PNP) and inorganic phosphate. The sequence is that of Pyridoxine 5'-phosphate synthase from Campylobacter jejuni subsp. jejuni serotype O:23/36 (strain 81-176).